The primary structure comprises 240 residues: Sulfite dehydrogenase subunit B (240 aa).

3 4Fe-4S ferredoxin-type domains span residues 4-34 (LALVIDLNVCVGCHACVTSCKEWNTSGWAGP), 64-95 (TETVHFPKSCLHCEEPPCVPVCPTGASYKRPD), and 97-126 (GVVLVDYDKCIGCKYCSWACPYGARELDAQ). 12 residues coordinate [4Fe-4S] cluster: cysteine 13, cysteine 16, cysteine 19, cysteine 23, cysteine 73, cysteine 76, cysteine 81, cysteine 85, cysteine 106, cysteine 109, cysteine 112, and cysteine 116.

As to quaternary structure, forms a heterotrimeric membrane-bound complex composed of a catalytic heterodimer (SoeAB) and a membrane anchor protein (SoeC). [4Fe-4S] cluster serves as cofactor.

Its subcellular location is the cell inner membrane. In terms of biological role, part of the SoeABC complex that catalyzes the oxidation of sulfite to sulfate. SoeB is probably the electron transfer subunit. The chain is Sulfite dehydrogenase subunit B from Allochromatium vinosum (strain ATCC 17899 / DSM 180 / NBRC 103801 / NCIMB 10441 / D) (Chromatium vinosum).